The sequence spans 515 residues: uncharacterized protein (515 aa).

Disordered regions lie at residues 117-188, 362-453, and 496-515; these read DNIL…RKSQ, RSTS…AESM, and GNAV…DYFN. Basic and acidic residues-rich tracts occupy residues 370-380, 388-402, and 428-438; these read KNVESETKQEE, PAED…EVIE, and PIKEIEDKVEP. Residues 502–515 show a composition bias toward acidic residues; that stretch reads ADTESMDDFMDYFN.

This is an uncharacterized protein from Ostreid herpesvirus 1 (isolate France) (OsHV-1).